A 120-amino-acid chain; its full sequence is Large ribosomal subunit protein bL19c (120 aa).

This sequence belongs to the bacterial ribosomal protein bL19 family.

Its subcellular location is the plastid. It localises to the chloroplast. This Trieres chinensis (Marine centric diatom) protein is Large ribosomal subunit protein bL19c (rpl19).